The following is a 295-amino-acid chain: 33 kDa chaperonin (295 aa).

2 cysteine pairs are disulfide-bonded: Cys-238/Cys-240 and Cys-271/Cys-274.

The protein belongs to the HSP33 family. Under oxidizing conditions two disulfide bonds are formed involving the reactive cysteines. Under reducing conditions zinc is bound to the reactive cysteines and the protein is inactive.

The protein localises to the cytoplasm. Redox regulated molecular chaperone. Protects both thermally unfolding and oxidatively damaged proteins from irreversible aggregation. Plays an important role in the bacterial defense system toward oxidative stress. The protein is 33 kDa chaperonin of Clostridium botulinum (strain Alaska E43 / Type E3).